Here is a 1191-residue protein sequence, read N- to C-terminus: Laminin subunit gamma-2 (1191 aa).

The N-terminal stretch at 1–21 (MPALWLSCCLGVALLLPAAQA) is a signal peptide. 12 disulfide bridges follow: Cys28-Cys37, Cys30-Cys53, Cys56-Cys65, Cys68-Cys81, Cys84-Cys96, Cys86-Cys102, Cys104-Cys113, Cys116-Cys128, Cys139-Cys150, Cys141-Cys155, Cys157-Cys166, and Cys169-Cys184. 3 consecutive Laminin EGF-like domains span residues 28-83 (CDCN…RCLP), 84-130 (CNCH…GCTR), and 139-186 (CDCD…GCTQ). In terms of domain architecture, Laminin EGF-like 4; first part spans 187 to 196 (CFCYGHSASC). The 169-residue stretch at 213–381 (QDVDGWKAVQ…SGAPAPWVER (169 aa)) folds into the Laminin IV type A domain. 2 N-linked (GlcNAc...) asparagine glycosylation sites follow: Asn342 and Asn362. The 34-residue stretch at 382-415 (CVCPAGYKGQFCQECASGYKRDSARLGPFGACVP) folds into the Laminin EGF-like 4; second part domain. Laminin EGF-like domains lie at 416–461 (CNCQ…SCKP), 462–516 (CPCH…PCQR), and 517–572 (CQCN…KCRA). 11 cysteine pairs are disulfide-bonded: Cys462–Cys470, Cys464–Cys481, Cys484–Cys493, Cys496–Cys514, Cys517–Cys531, Cys519–Cys538, Cys541–Cys550, Cys553–Cys570, Cys573–Cys585, Cys575–Cys591, and Cys593–Cys602. Asn526 carries N-linked (GlcNAc...) asparagine glycosylation. Residues 573-602 (CNCSPMGSEPGECRGDGSCVCKPGFGGLNC) enclose the Laminin EGF-like 8; truncated domain. The short motif at 586 to 588 (RGD) is the Cell attachment site element. Residues 603 to 1191 (DHAALTSCPA…CYNTQALEQQ (589 aa)) form a domain II and I region. Coiled coils occupy residues 612-710 (ACYN…IRAL) and 759-786 (LAQEATRKADSHAESANAMKQLARETED). The O-linked (Xyl...) (chondroitin sulfate) serine glycan is linked to Ser805. The N-linked (GlcNAc...) asparagine glycan is linked to Asn941. Positions 946–996 (EVENILKNLREFDLQVEDRKAEAEEAMKRLSSISQKVADASDKTQQAETAL) form a coiled coil. An N-linked (GlcNAc...) asparagine glycan is attached at Asn1032. Residues 1139–1178 (LMSDLEERVRRQRNHLHLLETSIDGILADVKNLENIRDNL) adopt a coiled-coil conformation.

Laminin is a complex glycoprotein, consisting of three different polypeptide chains (alpha, beta, gamma), which are bound to each other by disulfide bonds into a cross-shaped molecule comprising one long and three short arms with globules at each end. Gamma-2 is a subunit of laminin-5 (laminin-332 or epiligrin/kalinin/nicein). Binds to fibulin-1, fibulin-1c, fibulin-2 and nidogen. In terms of processing, O-glycosylated; contains chondroitin sulfate (CS). Epithelial cells of many tissues, particularly high levels in tongue, hair follicles and kidney. Basement membranes of the collecting tubules of kidney and pancreas.

The protein resides in the secreted. It is found in the extracellular space. Its subcellular location is the extracellular matrix. The protein localises to the basement membrane. Binding to cells via a high affinity receptor, laminin is thought to mediate the attachment, migration and organization of cells into tissues during embryonic development by interacting with other extracellular matrix components. The chain is Laminin subunit gamma-2 (Lamc2) from Mus musculus (Mouse).